Here is a 213-residue protein sequence, read N- to C-terminus: Dimethyl sulfoxide reductase transcriptional activator (213 aa).

An HTH bat-type domain is found at Leu155 to Ala206.

In terms of biological role, involved in activating dmsEABCD gene expression related to dimethyl sulfoxide (DMSO) reductase. Required for anaerobic respiration on dimethyl sulfoxide (DMSO). The chain is Dimethyl sulfoxide reductase transcriptional activator from Haloferax volcanii (strain ATCC 29605 / DSM 3757 / JCM 8879 / NBRC 14742 / NCIMB 2012 / VKM B-1768 / DS2) (Halobacterium volcanii).